A 204-amino-acid chain; its full sequence is Glycerol-3-phosphate acyltransferase (204 aa).

5 helical membrane-spanning segments follow: residues 8–28, 53–73, 81–101, 116–136, and 155–175; these read MLVF…CYIF, VPAI…VVLA, FITA…IFFG, FGFS…VAVI, and VIFT…IIIL.

The protein belongs to the PlsY family. As to quaternary structure, probably interacts with PlsX.

It is found in the cell inner membrane. The enzyme catalyses an acyl phosphate + sn-glycerol 3-phosphate = a 1-acyl-sn-glycero-3-phosphate + phosphate. Its pathway is lipid metabolism; phospholipid metabolism. Functionally, catalyzes the transfer of an acyl group from acyl-phosphate (acyl-PO(4)) to glycerol-3-phosphate (G3P) to form lysophosphatidic acid (LPA). This enzyme utilizes acyl-phosphate as fatty acyl donor, but not acyl-CoA or acyl-ACP. This Francisella philomiragia subsp. philomiragia (strain ATCC 25017 / CCUG 19701 / FSC 153 / O#319-036) protein is Glycerol-3-phosphate acyltransferase.